The primary structure comprises 270 residues: Putative phosphoenolpyruvate synthase regulatory protein (270 aa).

Position 149–156 (149–156 (GVSRSGKT)) interacts with ADP.

Belongs to the pyruvate, phosphate/water dikinase regulatory protein family. PSRP subfamily.

The catalysed reaction is [pyruvate, water dikinase] + ADP = [pyruvate, water dikinase]-phosphate + AMP + H(+). It carries out the reaction [pyruvate, water dikinase]-phosphate + phosphate + H(+) = [pyruvate, water dikinase] + diphosphate. Functionally, bifunctional serine/threonine kinase and phosphorylase involved in the regulation of the phosphoenolpyruvate synthase (PEPS) by catalyzing its phosphorylation/dephosphorylation. This is Putative phosphoenolpyruvate synthase regulatory protein from Alteromonas mediterranea (strain DSM 17117 / CIP 110805 / LMG 28347 / Deep ecotype).